The primary structure comprises 99 residues: Glycine-rich protein (99 aa).

Positions 1 to 18 are cleaved as a signal peptide; it reads MKSMIAVLLLALVATSMA.

It belongs to the non-disulfide-bridged peptide (NDBP) superfamily. In terms of tissue distribution, expressed by the venom gland.

The protein localises to the secreted. This Lychas mucronatus (Chinese swimming scorpion) protein is Glycine-rich protein.